The primary structure comprises 410 residues: Cytochrome P450 (410 aa).

Cys-359 provides a ligand contact to heme.

Belongs to the cytochrome P450 family. Heme is required as a cofactor.

This chain is Cytochrome P450 (cypA), found in Bacillus subtilis (strain 168).